A 377-amino-acid polypeptide reads, in one-letter code: MKFASEFRDPALAKGLLAEIARLADQIGATAEKPVHIMEICGGHTHSIFRYGLDKLIHPGIEFIHGPGCPVCVLPRARVDECIEIAGRPEVIFCTFGDAMRVPGSKLSLMQAKAAGADIRMVYSPLDALELARRNPGREVVFFGLGFETTTPSTALAIQQAAREGLANFSVFCNHITVPEPIRALLDDPYMRLDGFIGPGHVSMVIGIHPYDFIAEDYGKPLVVAGFEPTDLLQSVLMVLRQISQGRAAIENQYARVVPEHGNRVSLAAIADVYERRPSFEWRGLGEIDASGLRIRAAYRAHDAEEKFGVGYAGQRAAVEEAEGCACGAVMTGRMKPVACAQFGKGCTPEMPLGALMVSSEGACAAYWQYGGARAAE.

Residues C41, C69, and C72 each coordinate Fe cation.

It belongs to the HypD family. [4Fe-4S] cluster is required as a cofactor.

Its pathway is protein modification; [NiFe] hydrogenase maturation. Functionally, involved in the maturation of [NiFe] hydrogenases. Involved in the biosynthesis of the Fe(CN)(2)CO cofactor. This is Hydrogenase maturation factor HypD from Rhodobacter capsulatus (Rhodopseudomonas capsulata).